A 90-amino-acid chain; its full sequence is MSVKIRLKRMGSKKNPFYRIVVADSRSPRDGRFIAQVGTYNPLTEPAQVKLEEEDILGWLNNGAQPSDTVKNILSKAGIMKKYHEAKFTK.

The protein belongs to the bacterial ribosomal protein bS16 family.

This Lactiplantibacillus plantarum (strain ATCC BAA-793 / NCIMB 8826 / WCFS1) (Lactobacillus plantarum) protein is Small ribosomal subunit protein bS16.